The following is a 623-amino-acid chain: DNA-directed RNA polymerase subunit gamma (623 aa).

Zn(2+) contacts are provided by Cys-70, Cys-72, Cys-85, and Cys-88. Mg(2+)-binding residues include Asp-466, Asp-468, and Asp-470.

This sequence belongs to the RNA polymerase beta' chain family. RpoC1 subfamily. In terms of assembly, in cyanobacteria the RNAP catalytic core is composed of 2 alpha, 1 beta, 1 beta', 1 gamma and 1 omega subunit. When a sigma factor is associated with the core the holoenzyme is formed, which can initiate transcription. The cofactor is Mg(2+). It depends on Zn(2+) as a cofactor.

It catalyses the reaction RNA(n) + a ribonucleoside 5'-triphosphate = RNA(n+1) + diphosphate. Functionally, DNA-dependent RNA polymerase catalyzes the transcription of DNA into RNA using the four ribonucleoside triphosphates as substrates. This is DNA-directed RNA polymerase subunit gamma from Acaryochloris marina (strain MBIC 11017).